We begin with the raw amino-acid sequence, 113 residues long: Nucleoid-associated protein P9303_00241 (113 aa).

The segment at 90–113 (TTTMKEQMEELTGGLNLNLPGMSD) is disordered.

It belongs to the YbaB/EbfC family. Homodimer.

Its subcellular location is the cytoplasm. It localises to the nucleoid. In terms of biological role, binds to DNA and alters its conformation. May be involved in regulation of gene expression, nucleoid organization and DNA protection. The protein is Nucleoid-associated protein P9303_00241 of Prochlorococcus marinus (strain MIT 9303).